A 354-amino-acid polypeptide reads, in one-letter code: Glycerol-3-phosphate dehydrogenase [NAD(P)+] (354 aa).

Residues S27, F28, R48, and K121 each contribute to the NADPH site. The sn-glycerol 3-phosphate site is built by K121 and G149. A153 is a binding site for NADPH. Sn-glycerol 3-phosphate is bound by residues K204, D257, S267, R268, and N269. The active-site Proton acceptor is the K204. R268 contacts NADPH. V292 and E294 together coordinate NADPH.

It belongs to the NAD-dependent glycerol-3-phosphate dehydrogenase family.

The protein resides in the cytoplasm. It catalyses the reaction sn-glycerol 3-phosphate + NAD(+) = dihydroxyacetone phosphate + NADH + H(+). The enzyme catalyses sn-glycerol 3-phosphate + NADP(+) = dihydroxyacetone phosphate + NADPH + H(+). Its pathway is membrane lipid metabolism; glycerophospholipid metabolism. In terms of biological role, catalyzes the reduction of the glycolytic intermediate dihydroxyacetone phosphate (DHAP) to sn-glycerol 3-phosphate (G3P), the key precursor for phospholipid synthesis. The protein is Glycerol-3-phosphate dehydrogenase [NAD(P)+] of Pseudomonas fluorescens (strain Pf0-1).